Reading from the N-terminus, the 293-residue chain is ATP synthase subunit a (293 aa).

6 consecutive transmembrane segments (helical) span residues 40-60 (DSLF…WLAA), 97-117 (LFVA…NALD), 151-171 (DLNV…YYGI), 188-208 (FHAH…LNLI), 225-245 (MFAG…WTGF), and 264-284 (AIFH…LTLV).

Belongs to the ATPase A chain family. F-type ATPases have 2 components, CF(1) - the catalytic core - and CF(0) - the membrane proton channel. CF(1) has five subunits: alpha(3), beta(3), gamma(1), delta(1), epsilon(1). CF(0) has three main subunits: a(1), b(2) and c(9-12). The alpha and beta chains form an alternating ring which encloses part of the gamma chain. CF(1) is attached to CF(0) by a central stalk formed by the gamma and epsilon chains, while a peripheral stalk is formed by the delta and b chains.

It is found in the cell inner membrane. Functionally, key component of the proton channel; it plays a direct role in the translocation of protons across the membrane. The polypeptide is ATP synthase subunit a (Bordetella bronchiseptica (strain ATCC BAA-588 / NCTC 13252 / RB50) (Alcaligenes bronchisepticus)).